Consider the following 388-residue polypeptide: Putrescine N-methyltransferase 1 (388 aa).

Composition is skewed to polar residues over residues 1-14, 23-39, and 46-88; these read MEVI…STIF, GYQN…QNGT, and HQNG…GNEL. The interval 1 to 88 is disordered; sequence MEVISTNTNG…TISHDNGNEL (88 aa). In terms of domain architecture, PABS spans 99–336; sequence PGWFSEFSAL…GVIGYMLCST (238 aa). Residues Q130, E205, and 236–237 each bind S-adenosyl-L-methionine; that span reads DG. D255 acts as the Proton acceptor in catalysis. Y324 contributes to the S-adenosyl-L-methionine binding site.

The protein belongs to the class I-like SAM-binding methyltransferase superfamily. Spermidine/spermine synthase family. In terms of tissue distribution, mainly expressed in roots.

It catalyses the reaction putrescine + S-adenosyl-L-methionine = N-methylputrescine + S-adenosyl-L-homocysteine + H(+). The protein operates within alkaloid biosynthesis; nicotine biosynthesis. Involved in the biosynthesis of pyridine alkaloid natural products, leading mainly to the production of anabasine, anatabine, nicotine and nornicotine, effective deterrents against herbivores with antiparasitic and pesticide properties (neurotoxins); nornicotine serves as the precursor in the synthesis of the carcinogen compound N'-nitrosonornicotine (NNN). Methyltransferase that mediates the conversion of putrescine to N-methylputrescine. This Nicotiana attenuata (Coyote tobacco) protein is Putrescine N-methyltransferase 1.